Reading from the N-terminus, the 489-residue chain is Probable capsid protein (489 aa).

Over residues 87–101 the composition is skewed to basic and acidic residues; the sequence is RMERGESSETKREQQ. Positions 87–111 are disordered; sequence RMERGESSETKREQQDLGATRKRKI. The short motif at 107–110 is the Nuclear localization signal element; that stretch reads RKRK. The CCHC-type zinc-finger motif lies at 409-426; that stretch reads CRCWICTEEGHYANECPN. Residues 466-489 form a disordered region; sequence ETTSEEESTTDSDSSSSDDEQLSF.

Belongs to the caulimoviridae capsid protein family. Interacts (via nuclear localization signal) with host importin alpha.

It is found in the virion. It localises to the host nucleus. Self assembles to form an icosahedral capsid, about 50 nm in diameter, nm, composed of 420 subunits of the viral capsid protein. The capsid encapsulates the genomic dsDNA. Following virus entry into host cell, provides nuclear import of the viral genome. Virus particles do not enter the nucleus, but dock at the nuclear membrane through the interaction with host importins. This chain is Probable capsid protein, found in Scrophularia californica (California bee plant).